A 102-amino-acid polypeptide reads, in one-letter code: Small ribosomal subunit protein uS10 (102 aa).

This sequence belongs to the universal ribosomal protein uS10 family. As to quaternary structure, part of the 30S ribosomal subunit.

Functionally, involved in the binding of tRNA to the ribosomes. This chain is Small ribosomal subunit protein uS10, found in Thermobifida fusca (strain YX).